The following is a 418-amino-acid chain: Tyrosine--tRNA ligase 1 (418 aa).

Tyr-34 serves as a coordination point for L-tyrosine. A 'HIGH' region motif is present at residues 39-48 (PTADSLHLGH). The L-tyrosine site is built by Tyr-169 and Gln-173. Residues 229–233 (KFGKS) carry the 'KMSKS' region motif. Lys-232 contributes to the ATP binding site. The region spanning 352–418 (LNIVELLVNA…GKKKNFVLTY (67 aa)) is the S4 RNA-binding domain.

The protein belongs to the class-I aminoacyl-tRNA synthetase family. TyrS type 1 subfamily. Homodimer.

It localises to the cytoplasm. The enzyme catalyses tRNA(Tyr) + L-tyrosine + ATP = L-tyrosyl-tRNA(Tyr) + AMP + diphosphate + H(+). In terms of biological role, catalyzes the attachment of tyrosine to tRNA(Tyr) in a two-step reaction: tyrosine is first activated by ATP to form Tyr-AMP and then transferred to the acceptor end of tRNA(Tyr). This Streptococcus thermophilus (strain CNRZ 1066) protein is Tyrosine--tRNA ligase 1.